Consider the following 1030-residue polypeptide: LPS-assembly protein LptD (1030 aa).

A signal peptide spans 1–32 (MEGPPTAAHAAAPLRTAVFLALAASWQQPAVA). The interval 50-213 (VAKRKDGGAD…APAGWTCKPQ (164 aa)) is disordered. Polar residues predominate over residues 78–91 (LSQSNRAAPSTAVS). A compositionally biased stretch (acidic residues) spans 126–137 (TEDEEDEESESA). Pro residues predominate over residues 161–171 (GTPPARAPRPE).

This sequence belongs to the LptD family. In terms of assembly, component of the lipopolysaccharide transport and assembly complex. Interacts with LptE and LptA.

It localises to the cell outer membrane. Functionally, together with LptE, is involved in the assembly of lipopolysaccharide (LPS) at the surface of the outer membrane. In Methylococcus capsulatus (strain ATCC 33009 / NCIMB 11132 / Bath), this protein is LPS-assembly protein LptD.